The chain runs to 81 residues: Photosystem I iron-sulfur center (81 aa).

2 4Fe-4S ferredoxin-type domains span residues 2 to 31 (SHSV…MVPW) and 37 to 68 (GQIA…VRVY). [4Fe-4S] cluster-binding residues include Cys-11, Cys-14, Cys-17, Cys-21, Cys-48, Cys-51, Cys-54, and Cys-58.

The eukaryotic PSI reaction center is composed of at least 11 subunits. Requires [4Fe-4S] cluster as cofactor.

It localises to the plastid. The protein resides in the chloroplast thylakoid membrane. It carries out the reaction reduced [plastocyanin] + hnu + oxidized [2Fe-2S]-[ferredoxin] = oxidized [plastocyanin] + reduced [2Fe-2S]-[ferredoxin]. Functionally, apoprotein for the two 4Fe-4S centers FA and FB of photosystem I (PSI); essential for photochemical activity. FB is the terminal electron acceptor of PSI, donating electrons to ferredoxin. The C-terminus interacts with PsaA/B/D and helps assemble the protein into the PSI complex. Required for binding of PsaD and PsaE to PSI. PSI is a plastocyanin/cytochrome c6-ferredoxin oxidoreductase, converting photonic excitation into a charge separation, which transfers an electron from the donor P700 chlorophyll pair to the spectroscopically characterized acceptors A0, A1, FX, FA and FB in turn. The polypeptide is Photosystem I iron-sulfur center (Euglena gracilis).